The primary structure comprises 167 residues: MNMTHHKSGLRWLWLAVLAFVLDQASKLAVVKLLPFGYPGVEITPFFNLVHVYNKGAAFSFLADQGGWQRWFFAVLAFAICGLLIHWLRKQSVAQRWSGIAYSLIIGGALGNVFDRLVLGHVVDFLDFYWQRAHWPAFNLADSFIFIGAAMIVLDGFRSEKKKDVTP.

The next 3 helical transmembrane spans lie at 12–32 (WLWLAVLAFVLDQASKLAVVK), 68–88 (WQRWFFAVLAFAICGLLIHWL), and 99–119 (GIAYSLIIGGALGNVFDRLVL). Catalysis depends on residues Asp124 and Asp142. A helical transmembrane segment spans residues 137 to 157 (AFNLADSFIFIGAAMIVLDGF).

This sequence belongs to the peptidase A8 family.

Its subcellular location is the cell inner membrane. The catalysed reaction is Release of signal peptides from bacterial membrane prolipoproteins. Hydrolyzes -Xaa-Yaa-Zaa-|-(S,diacylglyceryl)Cys-, in which Xaa is hydrophobic (preferably Leu), and Yaa (Ala or Ser) and Zaa (Gly or Ala) have small, neutral side chains.. It functions in the pathway protein modification; lipoprotein biosynthesis (signal peptide cleavage). This protein specifically catalyzes the removal of signal peptides from prolipoproteins. The chain is Lipoprotein signal peptidase from Aeromonas hydrophila subsp. hydrophila (strain ATCC 7966 / DSM 30187 / BCRC 13018 / CCUG 14551 / JCM 1027 / KCTC 2358 / NCIMB 9240 / NCTC 8049).